Here is a 133-residue protein sequence, read N- to C-terminus: MLPAQHKLNSSMQFRTVMRKGRRAGSKTVVVHLWDSAESLDGTEKQGEVASFGGPRFGLVVSKAVGNAVVRHRTSRRLRHICASIVEKSPELLSPTHHVVIRALAGAGNAPSAELERDIRYGLGKTSRVRTNK.

Belongs to the RnpA family. As to quaternary structure, consists of a catalytic RNA component (M1 or rnpB) and a protein subunit.

It carries out the reaction Endonucleolytic cleavage of RNA, removing 5'-extranucleotides from tRNA precursor.. In terms of biological role, RNaseP catalyzes the removal of the 5'-leader sequence from pre-tRNA to produce the mature 5'-terminus. It can also cleave other RNA substrates such as 4.5S RNA. The protein component plays an auxiliary but essential role in vivo by binding to the 5'-leader sequence and broadening the substrate specificity of the ribozyme. The protein is Ribonuclease P protein component of Corynebacterium glutamicum (strain R).